The primary structure comprises 382 residues: MKALHFGAGNIGRGFIGKLLADAGVGLTFADVNQTVLDALNARHSYQVRVVGEQEQIDTVSGVDAVNSTSEDVVTLIATVDLVTTAVGPVVLERIAPAIAKGLVLRKAQGNERPLNIIACENMVRGTSQLKTHVFNALEEGDKAWVESHIGFVDSAVDRIVPPSASAAHDPLEVTVETFSEWIVDKTQFKGELPTIAGMELTDNLMAFVERKLFTLNTGHAITAYLGKQAGHQTIRDAILDEKIRLVVRGAMEESGAVLIKRYGFDDAKHAAYIEKILSRFENPYLKDDVERVGRQPLRKLSAGDRLIKPLLGTLEYGLPHQNLVLGIAAAMHFRSEDDPQAQELAQLIADKGPQAALAQISGLDANSDVVASAVNAYNATA.

Residue 3 to 14 (ALHFGAGNIGRG) participates in NAD(+) binding.

This sequence belongs to the mannitol dehydrogenase family.

The catalysed reaction is D-mannitol 1-phosphate + NAD(+) = beta-D-fructose 6-phosphate + NADH + H(+). This chain is Mannitol-1-phosphate 5-dehydrogenase, found in Cronobacter sakazakii (strain ATCC BAA-894) (Enterobacter sakazakii).